Reading from the N-terminus, the 593-residue chain is Aspartate--tRNA ligase (593 aa).

E180 contributes to the L-aspartate binding site. The aspartate stretch occupies residues 204 to 207; the sequence is QIFK. R226 provides a ligand contact to L-aspartate. ATP contacts are provided by residues 226-228 and Q235; that span reads RDE. H453 is a binding site for L-aspartate. E487 provides a ligand contact to ATP. R494 provides a ligand contact to L-aspartate. 539–542 is an ATP binding site; that stretch reads GLDR.

The protein belongs to the class-II aminoacyl-tRNA synthetase family. Type 1 subfamily. Homodimer.

It is found in the cytoplasm. The catalysed reaction is tRNA(Asp) + L-aspartate + ATP = L-aspartyl-tRNA(Asp) + AMP + diphosphate. In terms of biological role, catalyzes the attachment of L-aspartate to tRNA(Asp) in a two-step reaction: L-aspartate is first activated by ATP to form Asp-AMP and then transferred to the acceptor end of tRNA(Asp). The chain is Aspartate--tRNA ligase from Clostridium botulinum (strain ATCC 19397 / Type A).